The chain runs to 248 residues: MESNSIIWSLLLASALISSFSVNAQGPAASPVTSTTTAPPPTTAAPPTTAAPPPTTTTPPVSAAQPPASPVTPPPAVTPTSPPAPKVAPVISPATPPPQPPQSPPASAPTVSPPPVSPPPAPTSPPPTPASPPPAPASPPPAPASPPPAPVSPPPVQAPSPISLPPAPAPAPTKHKRKHKHKRHHHAPAPAPIPPSPPSPPVLTDPQDTAPAPSPNTNGGNALNQLKGRAVMWLNTGLVILFLLAMTA.

A signal peptide spans 1–24; that stretch reads MESNSIIWSLLLASALISSFSVNA. A compositionally biased stretch (low complexity) spans 25–37; that stretch reads QGPAASPVTSTTT. Positions 25-221 are disordered; the sequence is QGPAASPVTS…APSPNTNGGN (197 aa). Pro residues-rich tracts occupy residues 38–57, 67–86, and 94–171; these read APPPTTAAPPTTAAPPPTTT, PASPVTPPPAVTPTSPPAPK, and ATPP…PAPA. Residues 173–187 are compositionally biased toward basic residues; sequence TKHKRKHKHKRHHHA. Residues 189–203 are compositionally biased toward pro residues; it reads APAPIPPSPPSPPVL. Residue Ser-196 is the site of GPI-anchor amidated serine attachment. A propeptide spans 197-248 (removed in mature form); the sequence is PPSPPVLTDPQDTAPAPSPNTNGGNALNQLKGRAVMWLNTGLVILFLLAMTA.

This sequence belongs to the lysine-rich AGP family. Post-translationally, O-glycosylated on the hydroxyproline residues. Strongly expressed in stems, moderately expressed in flowers and roots and weakly expressed in young leaves.

The protein resides in the cell membrane. In terms of biological role, proteoglycan that seems to be implicated in diverse developmental roles such as differentiation, cell-cell recognition, embryogenesis and programmed cell death. The polypeptide is Lysine-rich arabinogalactan protein 19 (AGP19) (Arabidopsis thaliana (Mouse-ear cress)).